Reading from the N-terminus, the 92-residue chain is Small ribosomal subunit protein bS20 (92 aa).

A disordered region spans residues 1–23; it reads MANTTSAKKATRKIARRTDVNKA.

The protein belongs to the bacterial ribosomal protein bS20 family.

Binds directly to 16S ribosomal RNA. This Rhizobium leguminosarum bv. trifolii (strain WSM2304) protein is Small ribosomal subunit protein bS20.